The sequence spans 940 residues: Isoleucine--tRNA ligase (940 aa).

A 'HIGH' region motif is present at residues 58 to 68; that stretch reads PYANGSIHIGH. Residue Glu-564 participates in L-isoleucyl-5'-AMP binding. Positions 605-609 match the 'KMSKS' region motif; that stretch reads KMSKS. Lys-608 contributes to the ATP binding site. Residues Cys-903, Cys-906, Cys-923, and Cys-926 each coordinate Zn(2+).

This sequence belongs to the class-I aminoacyl-tRNA synthetase family. IleS type 1 subfamily. In terms of assembly, monomer. The cofactor is Zn(2+).

Its subcellular location is the cytoplasm. It carries out the reaction tRNA(Ile) + L-isoleucine + ATP = L-isoleucyl-tRNA(Ile) + AMP + diphosphate. Its function is as follows. Catalyzes the attachment of isoleucine to tRNA(Ile). As IleRS can inadvertently accommodate and process structurally similar amino acids such as valine, to avoid such errors it has two additional distinct tRNA(Ile)-dependent editing activities. One activity is designated as 'pretransfer' editing and involves the hydrolysis of activated Val-AMP. The other activity is designated 'posttransfer' editing and involves deacylation of mischarged Val-tRNA(Ile). The polypeptide is Isoleucine--tRNA ligase (Shewanella baltica (strain OS223)).